Here is a 359-residue protein sequence, read N- to C-terminus: N-acetylneuraminate-9-phosphate synthase (359 aa).

N6-acetyllysine occurs at positions 61, 74, and 79. Position 275 is a phosphoserine (Ser275). The residue at position 290 (Lys290) is an N6-acetyllysine. The region spanning Ser294–His353 is the AFP-like domain.

Ubiquitous.

The enzyme catalyses aldehydo-N-acetyl-D-mannosamine 6-phosphate + phosphoenolpyruvate + H2O = N-acetylneuraminate 9-phosphate + phosphate. The catalysed reaction is aldehydo-D-mannose 6-phosphate + phosphoenolpyruvate + H2O = 3-deoxy-D-glycero-beta-D-galacto-non-2-ulopyranosonate 9-phosphate + phosphate. Catalyzes the condensation of phosphoenolpyruvate (PEP) and N-acetylmannosamine 6-phosphate (ManNAc-6-P) to synthesize N-acetylneuraminate-9-phosphate (Neu5Ac-9-P). Also catalyzes the condensation of PEP and D-mannose 6-phosphate (Man-6-P) to produce 3-deoxy-D-glycero-beta-D-galacto-non-2-ulopyranosonate 9-phosphate (KDN-9-P). Neu5Ac-9-P and KDN-9-P are the phosphorylated forms of sialic acids N-acetylneuraminic acid (Neu5Ac) and deaminoneuraminic acid (KDN), respectively. Required for brain and skeletal development. The protein is N-acetylneuraminate-9-phosphate synthase of Homo sapiens (Human).